The sequence spans 239 residues: Phosphoribosylaminoimidazole-succinocarboxamide synthase (239 aa).

The protein belongs to the SAICAR synthetase family.

The catalysed reaction is 5-amino-1-(5-phospho-D-ribosyl)imidazole-4-carboxylate + L-aspartate + ATP = (2S)-2-[5-amino-1-(5-phospho-beta-D-ribosyl)imidazole-4-carboxamido]succinate + ADP + phosphate + 2 H(+). It functions in the pathway purine metabolism; IMP biosynthesis via de novo pathway; 5-amino-1-(5-phospho-D-ribosyl)imidazole-4-carboxamide from 5-amino-1-(5-phospho-D-ribosyl)imidazole-4-carboxylate: step 1/2. This Dichelobacter nodosus (strain VCS1703A) protein is Phosphoribosylaminoimidazole-succinocarboxamide synthase.